A 213-amino-acid polypeptide reads, in one-letter code: ATP synthase peripheral stalk subunit OSCP, mitochondrial (213 aa).

A mitochondrion-targeting transit peptide spans 1–23; sequence MAAPAVSGFSRQVRCFSTSVVRP. Positions 5-23 match the SIFI-degron motif; sequence AVSGFSRQVRCFSTSVVRP. K54, K60, K70, and K73 each carry N6-acetyllysine. K90 bears the N6-succinyllysine mark. An N6-acetyllysine; alternate mark is found at K100 and K158. N6-succinyllysine; alternate is present on residues K100 and K158. 3 positions are modified to N6-acetyllysine: K172, K176, and K192. An N6-succinyllysine modification is found at K199.

Belongs to the ATPase delta chain family. In terms of assembly, component of the ATP synthase complex composed at least of ATP5F1A/subunit alpha, ATP5F1B/subunit beta, ATP5MC1/subunit c (homooctomer), MT-ATP6/subunit a, MT-ATP8/subunit 8, ATP5ME/subunit e, ATP5MF/subunit f, ATP5MG/subunit g, ATP5MK/subunit k, ATP5MJ/subunit j, ATP5F1C/subunit gamma, ATP5F1D/subunit delta, ATP5F1E/subunit epsilon, ATP5PF/subunit F6, ATP5PB/subunit b, ATP5PD/subunit d, ATP5PO/subunit OSCP. ATP synthase complex consists of a soluble F(1) head domain (subunits alpha(3) and beta(3)) - the catalytic core - and a membrane F(0) domain - the membrane proton channel (subunits c, a, 8, e, f, g, k and j). These two domains are linked by a central stalk (subunits gamma, delta, and epsilon) rotating inside the F1 region and a stationary peripheral stalk (subunits F6, b, d, and OSCP). In terms of processing, in response to mitochondrial stress, the precursor protein is ubiquitinated by the SIFI complex in the cytoplasm before mitochondrial import, leading to its degradation. Within the SIFI complex, UBR4 initiates ubiquitin chain that are further elongated or branched by KCMF1.

Its subcellular location is the mitochondrion. It localises to the mitochondrion inner membrane. Its function is as follows. Subunit OSCP, of the mitochondrial membrane ATP synthase complex (F(1)F(0) ATP synthase or Complex V) that produces ATP from ADP in the presence of a proton gradient across the membrane which is generated by electron transport complexes of the respiratory chain. ATP synthase complex consist of a soluble F(1) head domain - the catalytic core - and a membrane F(1) domain - the membrane proton channel. These two domains are linked by a central stalk rotating inside the F(1) region and a stationary peripheral stalk. During catalysis, ATP synthesis in the catalytic domain of F(1) is coupled via a rotary mechanism of the central stalk subunits to proton translocation. In vivo, can only synthesize ATP although its ATP hydrolase activity can be activated artificially in vitro. Part of the complex F(0) domain. Part of the complex F(0) domain and the peripheric stalk, which acts as a stator to hold the catalytic alpha(3)beta(3) subcomplex and subunit a/ATP6 static relative to the rotary elements. This Rhinolophus ferrumequinum (Greater horseshoe bat) protein is ATP synthase peripheral stalk subunit OSCP, mitochondrial.